Reading from the N-terminus, the 189-residue chain is Large ribosomal subunit protein bL12c (189 aa).

Disordered regions lie at residues 1-30 (MAAT…HPQP) and 165-189 (EGVS…VSIV). A chloroplast-targeting transit peptide spans 1 to 56 (MAATTTMATLNLPSLTSHPNSSTFPKHPQPLQFPFRTTTNPISLSSTRTTRLRPIA). The segment covering 11-24 (NLPSLTSHPNSSTF) has biased composition (polar residues). Residues 165–183 (EGVSKDDAEDAKKQLEDAG) show a composition bias toward basic and acidic residues.

As to quaternary structure, component of the chloroplast large ribosomal subunit (LSU). Mature 70S chloroplast ribosomes of higher plants consist of a small (30S) and a large (50S) subunit. The 30S small subunit contains 1 molecule of ribosomal RNA (16S rRNA) and 24 different proteins. The 50S large subunit contains 3 rRNA molecules (23S, 5S and 4.5S rRNA) and 33 different proteins.

Its subcellular location is the plastid. The protein localises to the chloroplast. Component of the chloroplast ribosome (chloro-ribosome), a dedicated translation machinery responsible for the synthesis of chloroplast genome-encoded proteins, including proteins of the transcription and translation machinery and components of the photosynthetic apparatus. This chain is Large ribosomal subunit protein bL12c (RPL12), found in Spinacia oleracea (Spinach).